The following is a 191-amino-acid chain: Ribonuclease HII (191 aa).

Residues 16 to 191 form the RNase H type-2 domain; sequence INLIGIDEAG…KLHRKSFKLL (176 aa). Positions 22, 23, and 110 each coordinate a divalent metal cation.

Belongs to the RNase HII family. Mn(2+) is required as a cofactor. Mg(2+) serves as cofactor.

Its subcellular location is the cytoplasm. It carries out the reaction Endonucleolytic cleavage to 5'-phosphomonoester.. Its function is as follows. Endonuclease that specifically degrades the RNA of RNA-DNA hybrids. This is Ribonuclease HII from Campylobacter jejuni subsp. jejuni serotype O:6 (strain 81116 / NCTC 11828).